Consider the following 103-residue polypeptide: MNEIGLGHFLSVAAVLFTLGTLGIFLNRKNVIIILMSIELMLLAVNINLVAFSIYLNDIVGQVFALLVLTVAAAEAAIGLAVLVVFFRNRGTIAVQDINLMKG.

3 consecutive transmembrane segments (helical) span residues 6–26, 32–52, and 67–87; these read LGHF…GIFL, IIIL…LVAF, and LVLT…VVFF.

Belongs to the complex I subunit 4L family. NDH-1 is composed of 14 different subunits. Subunits NuoA, H, J, K, L, M, N constitute the membrane sector of the complex.

The protein localises to the cell inner membrane. The enzyme catalyses a quinone + NADH + 5 H(+)(in) = a quinol + NAD(+) + 4 H(+)(out). Functionally, NDH-1 shuttles electrons from NADH, via FMN and iron-sulfur (Fe-S) centers, to quinones in the respiratory chain. The immediate electron acceptor for the enzyme in this species is believed to be ubiquinone. Couples the redox reaction to proton translocation (for every two electrons transferred, four hydrogen ions are translocated across the cytoplasmic membrane), and thus conserves the redox energy in a proton gradient. The chain is NADH-quinone oxidoreductase subunit K 1 from Rhodopseudomonas palustris (strain ATCC BAA-98 / CGA009).